A 504-amino-acid chain; its full sequence is L-amino-acid oxidase (504 aa).

The first 18 residues, 1–18 (MNVFFMFSLLFLAALGSC), serve as a signal peptide directing secretion. C28 and C191 are disulfide-bonded. FAD is bound by residues 61-62 (MS), 81-82 (EA), R89, and 105-108 (GPMR). Residue R108 coordinates substrate. N-linked (GlcNAc...) asparagine glycosylation is present at N190. H241 provides a ligand contact to substrate. V279 contacts FAD. A disulfide bridge links C349 with C430. A glycan (N-linked (GlcNAc...) asparagine) is linked at N379. Y390 contacts substrate. FAD contacts are provided by residues E475 and 482-487 (GWIDST). Substrate is bound at residue 482-483 (GW).

This sequence belongs to the flavin monoamine oxidase family. FIG1 subfamily. In terms of assembly, homodimer; non-covalently linked. FAD serves as cofactor. In terms of tissue distribution, expressed by the venom gland.

It is found in the secreted. The catalysed reaction is an L-alpha-amino acid + O2 + H2O = a 2-oxocarboxylate + H2O2 + NH4(+). The enzyme catalyses L-leucine + O2 + H2O = 4-methyl-2-oxopentanoate + H2O2 + NH4(+). Functionally, catalyzes an oxidative deamination of predominantly hydrophobic and aromatic L-amino acids, thus producing hydrogen peroxide that may contribute to the diverse toxic effects of this enzyme. Shows activity on L-Leu. Exhibits diverse biological activities, such as hemorrhage, hemolysis, edema, antibacterial and antiparasitic activities, as well as regulation of platelet aggregation. Its effect on platelets is controversial, since it either induces aggregation or inhibits agonist-induced aggregation. These different effects are probably due to different experimental conditions. This protein induces apoptosis of cultured HeLa cells. The protein is L-amino-acid oxidase of Gloydius halys (Chinese water mocassin).